We begin with the raw amino-acid sequence, 126 residues long: RIFQICELSRVLKENGLGGFHGVSLEEWLCVIFHESGYDSQALNYYNGSSSHGLFQINQPYWCDDXDSESTEPSVNACQIPCSKLLDDDILDDIECAKKIVKEPKGITAWEAWQPFCNSDLDQWKC.

Positions 1–126 constitute a C-type lysozyme domain; the sequence is RIFQICELSR…CNSDLDQWKC (126 aa). 4 disulfide bridges follow: cysteine 6–cysteine 126, cysteine 30–cysteine 117, cysteine 63–cysteine 82, and cysteine 78–cysteine 96. N-linked (GlcNAc...) asparagine glycosylation occurs at asparagine 47. Ca(2+)-binding residues include lysine 84, aspartate 87, aspartate 89, aspartate 92, and aspartate 93.

It belongs to the glycosyl hydrolase 22 family. In terms of assembly, lactose synthase (LS) is a heterodimer of a catalytic component, beta1,4-galactosyltransferase (beta4Gal-T1) and a regulatory component, alpha-lactalbumin (LA). In terms of tissue distribution, mammary gland specific. Secreted in milk.

Its subcellular location is the secreted. In terms of biological role, regulatory subunit of lactose synthase, changes the substrate specificity of galactosyltransferase in the mammary gland making glucose a good acceptor substrate for this enzyme. This enables LS to synthesize lactose, the major carbohydrate component of milk. In other tissues, galactosyltransferase transfers galactose onto the N-acetylglucosamine of the oligosaccharide chains in glycoproteins. This chain is Alpha-lactalbumin (LALBA), found in Ornithorhynchus anatinus (Duckbill platypus).